Consider the following 173-residue polypeptide: Large ribosomal subunit protein uL10 (173 aa).

Belongs to the universal ribosomal protein uL10 family. Part of the ribosomal stalk of the 50S ribosomal subunit. The N-terminus interacts with L11 and the large rRNA to form the base of the stalk. The C-terminus forms an elongated spine to which L12 dimers bind in a sequential fashion forming a multimeric L10(L12)X complex.

Forms part of the ribosomal stalk, playing a central role in the interaction of the ribosome with GTP-bound translation factors. The sequence is that of Large ribosomal subunit protein uL10 from Maridesulfovibrio salexigens (strain ATCC 14822 / DSM 2638 / NCIMB 8403 / VKM B-1763) (Desulfovibrio salexigens).